Reading from the N-terminus, the 406-residue chain is uncharacterized protein (406 aa).

Transmembrane regions (helical) follow at residues 7 to 27, 43 to 63, 69 to 89, 98 to 118, 155 to 175, 220 to 240, 253 to 273, 297 to 317, 352 to 372, and 374 to 394; these read SILF…MVVI, VTLI…LITI, LTII…FYAL, LILV…FSPL, GLII…FLLF, IIIM…SVSL, WWGF…FIIY, LTLI…VLFM, VQFI…FLGV, and LVYV…FSQL.

The protein belongs to the major facilitator superfamily.

Its subcellular location is the cell membrane. This is an uncharacterized protein from Bacillus subtilis (strain 168).